The following is a 167-amino-acid chain: N5-carboxyaminoimidazole ribonucleotide mutase (167 aa).

The substrate site is built by Ser11, Asp14, and Arg41.

The protein belongs to the AIR carboxylase family. Class I subfamily.

The catalysed reaction is 5-carboxyamino-1-(5-phospho-D-ribosyl)imidazole + H(+) = 5-amino-1-(5-phospho-D-ribosyl)imidazole-4-carboxylate. It participates in purine metabolism; IMP biosynthesis via de novo pathway; 5-amino-1-(5-phospho-D-ribosyl)imidazole-4-carboxylate from 5-amino-1-(5-phospho-D-ribosyl)imidazole (N5-CAIR route): step 2/2. In terms of biological role, catalyzes the conversion of N5-carboxyaminoimidazole ribonucleotide (N5-CAIR) to 4-carboxy-5-aminoimidazole ribonucleotide (CAIR). This is N5-carboxyaminoimidazole ribonucleotide mutase from Aquifex aeolicus (strain VF5).